The chain runs to 313 residues: Zinc transporter ZitB (313 aa).

Residues 1–20 lie on the Cytoplasmic side of the membrane; that stretch reads MAHSHSHTSSHLPEDNNARR. The chain crosses the membrane as a helical span at residues 21–41; the sequence is LLYAFGVTAGFMLVEVVGGFL. At 42–47 the chain is on the periplasmic side; the sequence is SGSLAL. The chain crosses the membrane as a helical span at residues 48–68; it reads LADAGHMLTDTAALLFALLAV. Over 69–89 the chain is Cytoplasmic; the sequence is QFSRRPPTIRHTFGWLRLTTL. The chain crosses the membrane as a helical span at residues 90–110; the sequence is AAFVNAIALVVITILIVWEAI. The Periplasmic segment spans residues 111–121; that stretch reads ERFRTPRPVEG. A helical transmembrane segment spans residues 122–142; that stretch reads GMMMAIAVAGLLANILSFWLL. Topologically, residues 143-159 are cytoplasmic; that stretch reads HHGSEEKNLNVRAAALH. A helical transmembrane segment spans residues 160-180; the sequence is VLGDLLGSVGAIIAALIIIWT. Position 181 (Gly181) is a topological domain, periplasmic. The helical transmembrane segment at 182–202 threads the bilayer; sequence WTPADPILSILVSLLVLRSAW. Residues 203–313 lie on the Cytoplasmic side of the membrane; it reads RLLKDSVNEL…GVSGHSHHHH (111 aa).

It belongs to the cation diffusion facilitator (CDF) transporter (TC 2.A.4) family. SLC30A subfamily.

The protein resides in the cell inner membrane. Its function is as follows. Involved in zinc efflux across the cytoplasmic membrane, thus reducing zinc accumulation in the cytoplasm and rendering bacteria more resistant to zinc. It may contribute to zinc homeostasis at low concentrations of zinc. The chain is Zinc transporter ZitB (zitB) from Shigella flexneri.